The sequence spans 1027 residues: C2 and GRAM domain-containing protein At5g50170 (1027 aa).

The 103-residue stretch at 1-103 folds into the C2 1 domain; the sequence is MRLYVYILQA…ENQTLLPTWF (103 aa). The span at 158 to 167 shows a compositional bias: basic and acidic residues; that stretch reads SPKDLISSRD. Disordered regions lie at residues 158-177 and 201-223; these read SPKDLISSRDGKRRKHHDGK and LHDESSVGQSVNSNYEDATDQCS. Residues 168-177 are compositionally biased toward basic residues; the sequence is GKRRKHHDGK. Residues 206-223 are compositionally biased toward polar residues; sequence SVGQSVNSNYEDATDQCS. The VASt 1 domain occupies 253–426; sequence TGGVLVDQKY…LLAKTYKTLD (174 aa). The chain crosses the membrane as a helical span at residues 452 to 472; the sequence is FLYFWSSSVICAVLLSVYVVV. Positions 516–639 constitute a C2 2 domain; the sequence is TVHFVQARLH…TADELADLSV (124 aa). In terms of domain architecture, GRAM spans 693 to 756; that stretch reads AFQKLFGLPH…LWEDIDDIQV (64 aa). The 164-residue stretch at 855–1018 folds into the VASt 2 domain; it reads MMSKVYTCDL…VIFDLFQKES (164 aa).

Its subcellular location is the membrane. The sequence is that of C2 and GRAM domain-containing protein At5g50170 from Arabidopsis thaliana (Mouse-ear cress).